A 712-amino-acid polypeptide reads, in one-letter code: Anaerobic ribonucleoside-triphosphate reductase (712 aa).

Residues P3–R92 form the ATP-cone domain. The region spanning K583–N708 is the Glycine radical domain. C644, C647, C662, and C665 together coordinate Zn(2+). G681 carries the post-translational modification Glycine radical.

Belongs to the anaerobic ribonucleoside-triphosphate reductase family. Forms a tetramer composed of two NrdD and two NrdG subunits.

It catalyses the reaction a ribonucleoside 5'-triphosphate + formate + H(+) = a 2'-deoxyribonucleoside 5'-triphosphate + CO2 + H2O. Its activity is regulated as follows. Activated under anaerobic conditions by NrdG, a tightly associated activase. Activation involves the formation of a glycyl radical at Gly-681. Functionally, catalyzes the conversion of ribonucleotides into deoxyribonucleotides, which are required for DNA synthesis and repair. The chain is Anaerobic ribonucleoside-triphosphate reductase (nrdD) from Salmonella typhimurium (strain LT2 / SGSC1412 / ATCC 700720).